An 89-amino-acid chain; its full sequence is Small ribosomal subunit protein uS17 (89 aa).

This sequence belongs to the universal ribosomal protein uS17 family. Part of the 30S ribosomal subunit.

One of the primary rRNA binding proteins, it binds specifically to the 5'-end of 16S ribosomal RNA. The sequence is that of Small ribosomal subunit protein uS17 from Azoarcus sp. (strain BH72).